The chain runs to 365 residues: Red-sensitive opsin (365 aa).

The Extracellular portion of the chain corresponds to 1-51; the sequence is MASQLNEAIFAARRRNDDDDTTRSSVFTYTNSNNTRGPFEGPNYHIAPRWV. Residue N33 is glycosylated (N-linked (GlcNAc...) asparagine). A helical membrane pass occupies residues 52–76; sequence YNLTSIWMIFVVFASVFTNGLVIVA. Topologically, residues 77 to 88 are cytoplasmic; that stretch reads TLKFKKLRHPLN. A helical membrane pass occupies residues 89–113; the sequence is WILVNMAIADLGETVIASTISVFNQ. Residues 114–128 lie on the Extracellular side of the membrane; the sequence is IFGYFILGHPMCVLE. A disulfide bridge links C125 with C202. A helical membrane pass occupies residues 129-148; that stretch reads GFTVSTCGITALWSLTVIAW. The Cytoplasmic portion of the chain corresponds to 149 to 167; the sequence is ERWFVVCKPFGNIKFDEKL. Residues 168-191 traverse the membrane as a helical segment; that stretch reads AATGIIFSWVWSAGWCAPPMFGWS. Residues 192-217 lie on the Extracellular side of the membrane; the sequence is RFWPHGLKTSCGPDVFSGSSDPGVQS. Residues 218-245 form a helical membrane-spanning segment; that stretch reads YMLVLMITCCIIPLAIIILCYLHVWWTI. At 246-267 the chain is on the cytoplasmic side; it reads RQVAQQQKESESTQKAEREVSR. Residues 268 to 291 form a helical membrane-spanning segment; sequence MVVVMIVAYIFCWGPYTFFACFAA. Over 292-299 the chain is Extracellular; the sequence is FSPGYSFH. Residues 300–324 traverse the membrane as a helical segment; that stretch reads PLAAALPAYFAKSATIYNPIIYVFM. Residue K311 is modified to N6-(retinylidene)lysine. Topologically, residues 325 to 365 are cytoplasmic; that stretch reads NRQFRNCIYQMFGKKVDDGSEVSSTSRTEVSSVSNSSVSPA. Residues 342 to 365 form a disordered region; sequence DGSEVSSTSRTEVSSVSNSSVSPA. Residues 345-365 show a composition bias toward low complexity; that stretch reads EVSSTSRTEVSSVSNSSVSPA.

The protein belongs to the G-protein coupled receptor 1 family. Opsin subfamily. Phosphorylated on some or all of the serine and threonine residues present in the C-terminal region.

Its subcellular location is the membrane. Visual pigments are the light-absorbing molecules that mediate vision. They consist of an apoprotein, opsin, covalently linked to cis-retinal. The sequence is that of Red-sensitive opsin (opn1lw1) from Xenopus laevis (African clawed frog).